A 145-amino-acid chain; its full sequence is Large ribosomal subunit protein uL15 (145 aa).

A disordered region spans residues 1–52 (MFNLLKPKGASKRRKIVGRGPGSGLGKTSGRGQKGQKARNTSPRLGFEGGQT). Over residues 19–33 (RGPGSGLGKTSGRGQ) the composition is skewed to gly residues.

It belongs to the universal ribosomal protein uL15 family. In terms of assembly, part of the 50S ribosomal subunit.

Functionally, binds to the 23S rRNA. The sequence is that of Large ribosomal subunit protein uL15 from Borreliella burgdorferi (strain ATCC 35210 / DSM 4680 / CIP 102532 / B31) (Borrelia burgdorferi).